Reading from the N-terminus, the 437-residue chain is GTPase Der (437 aa).

2 EngA-type G domains span residues 3–167 and 176–352; these read NLVA…SKEG and PRFA…QART. GTP contacts are provided by residues 9–16, 56–60, 119–122, 182–189, 229–233, and 294–297; these read GRPNVGKS, DTGGW, NKTD, GRPNAGKS, DTAGI, and NKWD. The KH-like domain maps to 353–437; it reads TRIPTARLNE…TPINIFIRQK (85 aa).

This sequence belongs to the TRAFAC class TrmE-Era-EngA-EngB-Septin-like GTPase superfamily. EngA (Der) GTPase family. In terms of assembly, associates with the 50S ribosomal subunit.

In terms of biological role, GTPase that plays an essential role in the late steps of ribosome biogenesis. The chain is GTPase Der from Phocaeicola vulgatus (strain ATCC 8482 / DSM 1447 / JCM 5826 / CCUG 4940 / NBRC 14291 / NCTC 11154) (Bacteroides vulgatus).